Reading from the N-terminus, the 308-residue chain is 4-diphosphocytidyl-2-C-methyl-D-erythritol kinase (308 aa).

Lysine 24 is a catalytic residue. 118–128 (PVGAGMAGGSA) contacts ATP. Aspartate 160 is a catalytic residue.

It belongs to the GHMP kinase family. IspE subfamily.

The catalysed reaction is 4-CDP-2-C-methyl-D-erythritol + ATP = 4-CDP-2-C-methyl-D-erythritol 2-phosphate + ADP + H(+). The protein operates within isoprenoid biosynthesis; isopentenyl diphosphate biosynthesis via DXP pathway; isopentenyl diphosphate from 1-deoxy-D-xylulose 5-phosphate: step 3/6. Its function is as follows. Catalyzes the phosphorylation of the position 2 hydroxy group of 4-diphosphocytidyl-2C-methyl-D-erythritol. This is 4-diphosphocytidyl-2-C-methyl-D-erythritol kinase from Bifidobacterium adolescentis (strain ATCC 15703 / DSM 20083 / NCTC 11814 / E194a).